A 650-amino-acid polypeptide reads, in one-letter code: Putative pumilio homolog 7, chloroplastic (650 aa).

Disordered stretches follow at residues 1–22 and 200–235; these read MDEFREASSVSSSPSTPLRTPL and NDDKRNMFGNNPQQFGWPSYSSSNSGTSPYNNGQEI. The N-terminal 77 residues, 1–77, are a transit peptide targeting the chloroplast; it reads MDEFREASSV…SPPFNGIIPK (77 aa). Composition is skewed to low complexity over residues 8–22 and 217–232; these read SSVSSSPSTPLRTPL and PSYSSSNSGTSPYNNG. The 343-residue stretch at 308–650 folds into the PUM-HD domain; it reads SNTRALMSNN…RIFSRNLLKK (343 aa). Pumilio repeat units lie at residues 333-368, 369-404, 408-443, 445-480, 481-516, 517-552, 553-591, and 594-625; these read DIQGYVYLMAKDQHGCRFLQRIFDEGTSVDAMIIFN, EVIAHVVELMMDPFGNYLMQKLLDVCTEEQRTQIVL, EEPGQLIRISLNAYGTRVVQRLVETIRSGKQISLVK, ALRPGFLDLIKDLNGNHVIQRCLQCLSTEDNKFIFD, AATKFCTEIATHRHGCCVLQKCIAYSMRQQREKLIA, EISRNSLLLAQDPFGNYAVQFVIELRIPSAVAMMLA, QLKGHYVQLSMQKFSSHMVERCLMHCPESRPQIVRELVS, and HFDQLLQDPYANFVIQAALAATKGPLHASLVE.

The protein localises to the plastid. Its subcellular location is the chloroplast. It is found in the cytoplasm. Its function is as follows. Sequence-specific RNA-binding protein that regulates translation and mRNA stability by binding the 3'-UTR of target mRNAs. This Arabidopsis thaliana (Mouse-ear cress) protein is Putative pumilio homolog 7, chloroplastic (APUM7).